Consider the following 549-residue polypeptide: Cation/acetate symporter ActP (549 aa).

A run of 13 helical transmembrane segments spans residues 33–53, 77–97, 103–123, 148–168, 183–203, 206–226, 262–282, 303–323, 355–375, 404–424, 428–448, 464–484, and 493–513; these read WQAI…TYWA, LAIA…ALVF, GLIY…LIAE, ILSA…QMVG, IAVV…GMLA, WVQI…AFMV, ISAL…PHIL, GFMG…IMLV, LFLG…VAGL, VSKI…VLFE, IAFM…PIIL, GGWL…TIWV, and IFPY…GIWF.

It belongs to the sodium:solute symporter (SSF) (TC 2.A.21) family.

It is found in the cell inner membrane. Its function is as follows. Transports acetate. This chain is Cation/acetate symporter ActP, found in Escherichia coli O6:K15:H31 (strain 536 / UPEC).